Reading from the N-terminus, the 404-residue chain is S-adenosylmethionine synthase (404 aa).

H18 contacts ATP. D20 lines the Mg(2+) pocket. E46 provides a ligand contact to K(+). L-methionine contacts are provided by E59 and Q102. A flexible loop region spans residues 102 to 112 (QSPDIAQGVDT). Residues 177-179 (DGK), 249-250 (KF), D258, 264-265 (RK), A281, and K285 each bind ATP. D258 contributes to the L-methionine binding site. K289 serves as a coordination point for L-methionine.

The protein belongs to the AdoMet synthase family. Homotetramer; dimer of dimers. It depends on Mg(2+) as a cofactor. Requires K(+) as cofactor.

Its subcellular location is the cytoplasm. It catalyses the reaction L-methionine + ATP + H2O = S-adenosyl-L-methionine + phosphate + diphosphate. Its pathway is amino-acid biosynthesis; S-adenosyl-L-methionine biosynthesis; S-adenosyl-L-methionine from L-methionine: step 1/1. Catalyzes the formation of S-adenosylmethionine (AdoMet) from methionine and ATP. The overall synthetic reaction is composed of two sequential steps, AdoMet formation and the subsequent tripolyphosphate hydrolysis which occurs prior to release of AdoMet from the enzyme. This chain is S-adenosylmethionine synthase, found in Nocardia farcinica (strain IFM 10152).